A 281-amino-acid polypeptide reads, in one-letter code: Transformer-2 protein homolog alpha (281 aa).

The segment at 1–116 (MSDVEENNFE…TGSRANPDPN (116 aa)) is disordered. At serine 2 the chain carries N-acetylserine. Serine 2 and serine 14 each carry phosphoserine. The residue at position 24 (threonine 24) is a Phosphothreonine. A compositionally biased stretch (basic residues) spans 51-82 (RSRSKSRSRSRRHSHRRYTRSRSHSHRRRSRS). Residues serine 80, serine 82, and serine 84 each carry the phosphoserine modification. The residue at position 86 (threonine 86) is a Phosphothreonine. The segment covering 90–108 (RRRRSRSHSPMSNRRRHTG) has biased composition (basic residues). 2 positions are modified to phosphoserine: serine 94 and serine 96. The region spanning 117–195 (TCLGVFGLSL…RRIRVDYSIT (79 aa)) is the RRM domain. A Glycyl lysine isopeptide (Lys-Gly) (interchain with G-Cter in SUMO2) cross-link involves residue lysine 196. Residues 196–223 (KRAHTPTPGIYMGRPTHSGGGGGGGGGG) form a linker region. The tract at residues 199-281 (HTPTPGIYMG…RSRSYSPRRY (83 aa)) is disordered. Phosphothreonine occurs at positions 200 and 202. Gly residues predominate over residues 213–231 (SGGGGGGGGGGGGGGGGGG). The residue at position 233 (arginine 233) is an Omega-N-methylarginine. A compositionally biased stretch (basic and acidic residues) spans 233 to 257 (RRRDSYYDRGYDRGYDRYEDYDYRR). Serine 237 is subject to Phosphoserine. Residues 267–281 (YRSRSRSRSYSPRRY) show a composition bias toward basic residues.

It belongs to the splicing factor SR family. Binds to A3 enhancer proteins SRp75, SRp55, SRp40 and SRp30. Interacts with ILDR1 (via C-terminus) and ILDR2. In terms of processing, phosphorylated in the RS domains. As to expression, expressed in inner ear.

The protein resides in the nucleus. Sequence-specific RNA-binding protein which participates in the control of pre-mRNA splicing. The polypeptide is Transformer-2 protein homolog alpha (Mus musculus (Mouse)).